A 360-amino-acid chain; its full sequence is Geranylgeranyl pyrophosphate synthase 3, chloroplastic (360 aa).

The transit peptide at 1–39 directs the protein to the chloroplast; it reads MATTVHLSSFSLFIQSRGRRDNSISSVKSLKKRTGLSPS. The segment at 24–54 is disordered; it reads ISSVKSLKKRTGLSPSSALTSQGGRDMIPPE. Polar residues predominate over residues 36 to 46; it reads LSPSSALTSQG. Isopentenyl diphosphate contacts are provided by K106, R109, and H138. Mg(2+)-binding residues include D145 and D151. Residue R156 coordinates dimethylallyl diphosphate. R157 contributes to the isopentenyl diphosphate binding site. Residues K245, T246, Q283, K300, and K310 each coordinate dimethylallyl diphosphate.

Belongs to the FPP/GGPP synthase family. In terms of assembly, monomer. Mg(2+) serves as cofactor. As to expression, mainly expressed in roots.

It is found in the plastid. Its subcellular location is the chloroplast. The catalysed reaction is isopentenyl diphosphate + dimethylallyl diphosphate = (2E)-geranyl diphosphate + diphosphate. It catalyses the reaction isopentenyl diphosphate + (2E)-geranyl diphosphate = (2E,6E)-farnesyl diphosphate + diphosphate. The enzyme catalyses isopentenyl diphosphate + (2E,6E)-farnesyl diphosphate = (2E,6E,10E)-geranylgeranyl diphosphate + diphosphate. It functions in the pathway isoprenoid biosynthesis; farnesyl diphosphate biosynthesis; farnesyl diphosphate from geranyl diphosphate and isopentenyl diphosphate: step 1/1. The protein operates within isoprenoid biosynthesis; geranyl diphosphate biosynthesis; geranyl diphosphate from dimethylallyl diphosphate and isopentenyl diphosphate: step 1/1. It participates in isoprenoid biosynthesis; geranylgeranyl diphosphate biosynthesis; geranylgeranyl diphosphate from farnesyl diphosphate and isopentenyl diphosphate: step 1/1. In terms of biological role, catalyzes the trans-addition of the three molecules of IPP onto DMAPP to form geranylgeranyl pyrophosphate. The chain is Geranylgeranyl pyrophosphate synthase 3, chloroplastic (GGPP3) from Arabidopsis thaliana (Mouse-ear cress).